Consider the following 576-residue polypeptide: Arginine--tRNA ligase (576 aa).

Positions 132 to 142 match the 'HIGH' region motif; that stretch reads ANPTGPMHIGH.

It belongs to the class-I aminoacyl-tRNA synthetase family. As to quaternary structure, monomer.

It is found in the cytoplasm. It carries out the reaction tRNA(Arg) + L-arginine + ATP = L-arginyl-tRNA(Arg) + AMP + diphosphate. The protein is Arginine--tRNA ligase of Ehrlichia chaffeensis (strain ATCC CRL-10679 / Arkansas).